Reading from the N-terminus, the 350-residue chain is Transmembrane protein 115 (350 aa).

Topologically, residues 1–19 (MQRALPGARQHLGAILASA) are cytoplasmic. The mediates homooligomerization stretch occupies residues 1-205 (MQRALPGARQ…FGLLSSWVYL (205 aa)). The helical transmembrane segment at 20-40 (SVVVKALCAVVLFLYLLSFAV) threads the bilayer. At 41-97 (DTGCLAVTPGYLFPPNFWIWTLATHGLMEQHVWDVAISLATVVVAGRLLEPLWGALE) the chain is on the lumenal side. A helical transmembrane segment spans residues 98–118 (LLIFFSVVNVSVGLLGALAYL). The Cytoplasmic segment spans residues 119–126 (LTYMASFN). A helical membrane pass occupies residues 127 to 147 (LVYLFTIRIHGALGFLGGVLV). Residues 148–165 (ALKQTMGDCVVLRVPQVR) are Lumenal-facing. The helical transmembrane segment at 166–186 (VSVVPMLLLALLLLLRLATLL) threads the bilayer. Residues 187–350 (QSPALASYGF…LITLETAPLL (164 aa)) lie on the Cytoplasmic side of the membrane. Positions 206–229 (RFYQRHSRGRGDMADHFAFATFFP) are mediates localization to the Golgi. The disordered stretch occupies residues 299-350 (EDQSAWPSMDDDEEEAGAKTDSPLPLEEASTPPGKVTVPESSLITLETAPLL). Thr329 carries the phosphothreonine modification.

This sequence belongs to the TMEM115 family. Homooligomer. Interacts with COPB1. May interact with LMAN1. Interacts with the COG complex; probably through COG3.

The protein resides in the golgi apparatus. It localises to the golgi stack membrane. In terms of biological role, may play a role in retrograde transport of proteins from the Golgi to the endoplasmic reticulum. May indirectly play a role in protein glycosylation in the Golgi. In Mus musculus (Mouse), this protein is Transmembrane protein 115.